The following is a 173-amino-acid chain: Co-chaperone protein HscB (173 aa).

One can recognise a J domain in the interval 2–74 (DYFTLFGLPA…LKRAEYMLSL (73 aa)).

This sequence belongs to the HscB family. Interacts with HscA and stimulates its ATPase activity. Interacts with IscU.

Co-chaperone involved in the maturation of iron-sulfur cluster-containing proteins. Seems to help targeting proteins to be folded toward HscA. The protein is Co-chaperone protein HscB of Photorhabdus laumondii subsp. laumondii (strain DSM 15139 / CIP 105565 / TT01) (Photorhabdus luminescens subsp. laumondii).